The sequence spans 357 residues: Neutral protease 2 homolog UREG_02006 (357 aa).

An N-terminal signal peptide occupies residues 1–19 (MLFSSRFLALAALLGQALA). The propeptide occupies 20–179 (LPIDDFSQSD…QSAVPTIEKR (160 aa)). 2 disulfides stabilise this stretch: cysteine 187/cysteine 259 and cysteine 266/cysteine 284. Position 308 (histidine 308) interacts with Zn(2+). Residue glutamate 309 is part of the active site. Histidine 312 and aspartate 323 together coordinate Zn(2+).

The protein belongs to the peptidase M35 family. Requires Zn(2+) as cofactor.

It is found in the secreted. It carries out the reaction Preferential cleavage of bonds with hydrophobic residues in P1'. Also 3-Asn-|-Gln-4 and 8-Gly-|-Ser-9 bonds in insulin B chain.. Secreted metalloproteinase that allows assimilation of proteinaceous substrates. Shows high activities on basic nuclear substrates such as histone and protamine. This chain is Neutral protease 2 homolog UREG_02006, found in Uncinocarpus reesii (strain UAMH 1704).